Consider the following 502-residue polypeptide: Phenylalanine--tRNA ligase alpha subunit (502 aa).

Residues T339, 382–384 (QIE), and Y422 contribute to the L-phenylalanine site. E424 lines the Mg(2+) pocket. L-phenylalanine is bound at residue F448.

This sequence belongs to the class-II aminoacyl-tRNA synthetase family. Phe-tRNA synthetase alpha subunit type 2 subfamily. As to quaternary structure, tetramer of two alpha and two beta subunits. Mg(2+) is required as a cofactor.

It is found in the cytoplasm. The enzyme catalyses tRNA(Phe) + L-phenylalanine + ATP = L-phenylalanyl-tRNA(Phe) + AMP + diphosphate + H(+). The sequence is that of Phenylalanine--tRNA ligase alpha subunit from Halobacterium salinarum (strain ATCC 29341 / DSM 671 / R1).